The chain runs to 140 residues: Large ribosomal subunit protein uL16 (140 aa).

Belongs to the universal ribosomal protein uL16 family. As to quaternary structure, part of the 50S ribosomal subunit.

Binds 23S rRNA and is also seen to make contacts with the A and possibly P site tRNAs. The polypeptide is Large ribosomal subunit protein uL16 (Amoebophilus asiaticus (strain 5a2)).